Reading from the N-terminus, the 456-residue chain is Maturase-like protein 1 (456 aa).

The protein to group II intron maturases.

The protein localises to the plastid. Functionally, could be required for group III intron excision. The protein is Maturase-like protein 1 (mat1) of Euglena longa (Euglenophycean alga).